Consider the following 191-residue polypeptide: MEAKAAPKPAASGACSVSAEETEKWMEEAMHMAKEALENTEVPVGCLMVYNNEVVGKGRNEVNQTKNATRHAEMVAIDQVLDWCRQSGKSPSEVFEHTVLYVTVEPCIMCAAALRLMKIPLVVYGCQNERFGGCGSVLNIASADLPNTGRPFQCIPGYRAEEAVEMLKTFYKQENPNAPKSKVRKKECQKS.

In terms of domain architecture, CMP/dCMP-type deaminase spans 20-145 (EETEKWMEEA…SVLNIASADL (126 aa)). A Zn(2+)-binding site is contributed by His-71. The active-site Proton donor is Glu-73. Zn(2+) contacts are provided by Cys-107 and Cys-110.

The protein belongs to the cytidine and deoxycytidylate deaminase family. ADAT2 subfamily. The cofactor is Zn(2+).

It catalyses the reaction adenosine(34) in tRNA + H2O + H(+) = inosine(34) in tRNA + NH4(+). Its function is as follows. Probably participates in deamination of adenosine-34 to inosine in many tRNAs. This Homo sapiens (Human) protein is tRNA-specific adenosine deaminase 2 (ADAT2).